A 464-amino-acid polypeptide reads, in one-letter code: MPVFEDVTRALVRELNPRGDLTPLDSLIDFKHFRPFCLVLRKRKSTLFWGARYVRTDYTLLDLLEPGSSPSDLTDSGNFSFKNMLDVQVQGLVEVPKTVKVKGTAGLSQSSTLEVQTLSVAPSALENLKKERKLSADHSFLNEMRYHEKNLYVVMEAVEAKQEVTVEQTGNANAIFSLPSLALLGLQGSLNNNKAVTIPKGCVLAYRVRLLRVFLFNLWDIPYICNDSMQTFPKIRRVPCSAFISPTQMISEEPEEEKLIGEMHEDFKTLKEEVQRETQEVEKLSPVGRSSLLTSLSHLLGKKKELQDLEQKLEGALDKGQKVTLEALPKDVLLSKDAMDAILYFLGALTELTEEQLKILVKSLEKKILPVQLKLVESTLEQNFLQDKEGVFPLQPDLLSSLGEEELTLTEALVGLSGLEVQRSGPQYAWDPDTRHNLCALYAGLSLLHLLSRKSNALTYCALS.

The triggers pyroptosis stretch occupies residues 1–261; it reads MPVFEDVTRA…EEPEEEKLIG (261 aa). 9-13 is a binding site for a cardiolipin; the sequence is RALVR. 4 consecutive transmembrane segments (beta stranded) span residues 78–95, 99–120, 164–180, and 184–198; these read NFSFKNMLDVQVQGLVEV, VKVKGTAGLSQSSTLEVQTLSV, VTVEQTGNANAIFSLPS, and LGLQGSLNNNKAVTI. Residues 255-327 adopt a coiled-coil conformation; it reads EEEKLIGEMH…DKGQKVTLEA (73 aa).

This sequence belongs to the gasdermin family. In terms of assembly, homooligomer; homooligomeric ring-shaped pore complex containing 18-36 subunits when inserted in the membrane. Cleavage relieves autoinhibition by releasing the N-terminal moiety (Gasdermin-A3, N-terminal) that initiates pyroptosis. In contrast to Gsdma, not cleaved by bacterial effector protein SpeB. Post-translationally, palmitoylated. As to expression, highest levels in skin with weak expression in placenta and testis. Not detected in the gastrointestinal tract. In skin, expressed in postnatal hair follicles and epidermis as well as sebaceous gland basal cells.

Its subcellular location is the cytoplasm. The protein resides in the cytosol. The protein localises to the cell membrane. It localises to the mitochondrion membrane. With respect to regulation, the full-length protein before cleavage is inactive: intramolecular interactions between N- and C-terminal domains mediate autoinhibition in the absence of activation signal. The intrinsic pyroptosis-inducing activity is carried by the released N-terminal moiety (Gasdermin-A3, N-terminal). In terms of biological role, precursor of a pore-forming protein involved in the transition from catagen to telogen at the end of hair follicle morphogenesis. This form constitutes the precursor of the pore: upon cleavage, the released N-terminal moiety (Gasdermin-A3, N-terminal) binds to membranes and forms pores, triggering pyroptosis. This form acts as a sensor of infection: activation is triggered by cleavage by some bacterial effector protein, which releases the N-terminal moiety (Gasdermin-A3, N-terminal). Its function is as follows. Pore-forming protein that causes membrane permeabilization and pyroptosis. Released upon cleavage by some bacterial effector protein, and binds to membrane inner leaflet lipids. Homooligomerizes within the membrane and forms pores of 10-15 nanometers (nm) of inner diameter, allowing the release of mature interleukin-1 (IL1B and IL18) and triggering pyroptosis. Binds to membrane inner leaflet lipids, including bisphosphorylated phosphatidylinositols, such as phosphatidylinositol (4,5)-bisphosphate, as well as phosphatidylinositol (3,4,5)-bisphosphate, and more weakly to monophosphorylated phosphatidylinositols. Also binds to bacterial and mitochondrial lipids, including cardiolipin, and exhibits bactericidal activity. Plays a role in the transition from catagen to telogen at the end of hair follicle morphogenesis, possibly by regulating hair follicle stem cell niche maintenance. Also required for mammary gland development. This is Gasdermin-A3 from Mus musculus (Mouse).